The sequence spans 134 residues: Prolactin (134 aa).

Cys-126 and Cys-134 form a disulfide bridge.

This sequence belongs to the somatotropin/prolactin family.

It localises to the secreted. The protein is Prolactin of Bufo japonicus (Japanese common toad).